The chain runs to 5381 residues: Protein purity of essence (5381 aa).

6 disordered regions span residues 140-174 (KHPE…PKLE), 339-364 (QQQT…TSKD), 599-621 (SPET…QKSA), 683-709 (RNDS…SSGS), 1162-1212 (SGGD…STET), and 1632-1659 (QAAQ…QSER). Positions 339–350 (QQQTAAAASTSQ) are enriched in low complexity. Low complexity-rich tracts occupy residues 690 to 709 (SPPS…SSGS) and 1167 to 1176 (SSCTSAASSS). Over residues 1632–1646 (QAAQPNPSEESSQAC) the composition is skewed to polar residues. The segment covering 1647–1658 (DHSEGGEQRQSE) has biased composition (basic and acidic residues). The segment at 1815–1884 (KLCTFSQTQK…EDGSCQALSR (70 aa)) adopts a UBR-type zinc-finger fold. Disordered regions lie at residues 1917–1939 (KRSN…KDSI), 2443–2479 (KNTT…KQLT), 2632–2652 (PDDS…TATQ), 3037–3143 (VSAG…DNNE), 3537–3562 (KQQQ…DREK), and 4247–4280 (HHQQ…KEAA). Composition is skewed to polar residues over residues 1920 to 1930 (NTAPGATQQQH), 2470 to 2479 (SSQQHQKQLT), 2643 to 2652 (SGPTPVTATQ), and 3048 to 3058 (NVATDGSTLRT). The segment covering 3065–3075 (GSGGSESGGSG) has biased composition (gly residues). Residues 3084–3104 (ARSSNFGDHPNTTPPRQSCSS) are compositionally biased toward polar residues. Positions 3119-3132 (SGSGGSASVPGGGL) are enriched in gly residues. The UBR4 E3 catalytic module stretch occupies residues 4904 to 5374 (PSLKYILRFL…SFIEDLLASL (471 aa)). A HemiRING-type zinc finger spans residues 5022–5136 (GLTCFICREG…SSYMQESTQR (115 aa)). Residues cysteine 5025, cysteine 5028, histidine 5074, and cysteine 5077 each coordinate Zn(2+). Residues 5139–5374 (ISYTSSIHDL…SFIEDLLASL (236 aa)) form the UZI domain.

It belongs to the UBR4 family.

Its function is as follows. Has a role in growth of the perineurial glial layer of the larval peripheral nerve. May have a role in male fertility and eye development or function. May bind calmodulin. The chain is Protein purity of essence from Drosophila pseudoobscura pseudoobscura (Fruit fly).